Reading from the N-terminus, the 276-residue chain is NAD(+)--dinitrogen-reductase ADP-D-ribosyltransferase (276 aa).

Monomer.

The catalysed reaction is L-arginyl-[dinitrogen reductase] + NAD(+) = N(omega)-alpha-(ADP-D-ribosyl)-L-arginyl-[dinitrogen reductase] + nicotinamide + H(+). In terms of biological role, involved in the regulation of the nitrogen fixation activity by the reversible ADP-ribosylation of the dinitrogenase reductase component of the nitrogenase enzyme complex. The ADP-ribosyltransferase (DraT) transfers the ADP-ribose group from NAD to dinitrogenase reductase. The ADP-ribose group is removed through the action of the ADP-ribosylglycohydrolase (DraG). This is NAD(+)--dinitrogen-reductase ADP-D-ribosyltransferase (draT) from Rhodospirillum rubrum.